A 357-amino-acid chain; its full sequence is UDP-N-acetylglucosamine--N-acetylmuramyl-(pentapeptide) pyrophosphoryl-undecaprenol N-acetylglucosamine transferase (357 aa).

Residues 14–16, N125, S190, and Q290 each bind UDP-N-acetyl-alpha-D-glucosamine; that span reads SGG.

This sequence belongs to the glycosyltransferase 28 family. MurG subfamily.

The protein resides in the cell inner membrane. The enzyme catalyses di-trans,octa-cis-undecaprenyl diphospho-N-acetyl-alpha-D-muramoyl-L-alanyl-D-glutamyl-meso-2,6-diaminopimeloyl-D-alanyl-D-alanine + UDP-N-acetyl-alpha-D-glucosamine = di-trans,octa-cis-undecaprenyl diphospho-[N-acetyl-alpha-D-glucosaminyl-(1-&gt;4)]-N-acetyl-alpha-D-muramoyl-L-alanyl-D-glutamyl-meso-2,6-diaminopimeloyl-D-alanyl-D-alanine + UDP + H(+). Its pathway is cell wall biogenesis; peptidoglycan biosynthesis. In terms of biological role, cell wall formation. Catalyzes the transfer of a GlcNAc subunit on undecaprenyl-pyrophosphoryl-MurNAc-pentapeptide (lipid intermediate I) to form undecaprenyl-pyrophosphoryl-MurNAc-(pentapeptide)GlcNAc (lipid intermediate II). The chain is UDP-N-acetylglucosamine--N-acetylmuramyl-(pentapeptide) pyrophosphoryl-undecaprenol N-acetylglucosamine transferase from Chlamydia felis (strain Fe/C-56) (Chlamydophila felis).